The primary structure comprises 350 residues: Transmembrane protein 185B (350 aa).

Helical transmembrane passes span 16 to 36 (LIYT…DGII), 41 to 61 (WAVF…ASVG), 81 to 101 (FKAM…EVLV), 111 to 131 (FWLL…AACV), 168 to 188 (WLVV…VVLY), 211 to 231 (VTMA…EVLL), and 240 to 260 (TFSY…LMAT).

This sequence belongs to the TMEM185 family.

It is found in the membrane. The sequence is that of Transmembrane protein 185B (TMEM185B) from Homo sapiens (Human).